The chain runs to 239 residues: Increased recombination centers protein 22-2 (239 aa).

The signal sequence occupies residues 1–19 (MKLSTIFTAFAATIATVAG). The Lumenal segment spans residues 20 to 161 (YETTGSKQTV…AAVSFFDPRL (142 aa)). A helical transmembrane segment spans residues 162–182 (IFLELVLLITFAGLIYVGYEI). At 183-239 (WGKQYFKGVAPVKAKKVSAAKASSPVASGPSTTSATGYDTNWIPESHLKQKKTKKVN) the chain is on the cytoplasmic side. The segment covering 201–213 (AAKASSPVASGPS) has biased composition (low complexity). The segment at 201-222 (AAKASSPVASGPSTTSATGYDT) is disordered.

Belongs to the IRC22 family.

It localises to the endoplasmic reticulum membrane. Is probably involved in a pathway contributing to genomic integrity. The polypeptide is Increased recombination centers protein 22-2 (IRC22-2) (Candida albicans (strain WO-1) (Yeast)).